The sequence spans 379 residues: tRNA-specific 2-thiouridylase MnmA (379 aa).

Residues 9 to 16 (AMSGGVDS) and Met-35 each bind ATP. An interaction with target base in tRNA region spans residues 94-96 (NPD). Cys-99 (nucleophile) is an active-site residue. Cysteines 99 and 195 form a disulfide. Residue Gly-123 coordinates ATP. Positions 145–147 (KDQ) are interaction with tRNA. Cys-195 functions as the Cysteine persulfide intermediate in the catalytic mechanism. Residues 307–308 (RY) are interaction with tRNA.

Belongs to the MnmA/TRMU family.

The protein localises to the cytoplasm. The enzyme catalyses S-sulfanyl-L-cysteinyl-[protein] + uridine(34) in tRNA + AH2 + ATP = 2-thiouridine(34) in tRNA + L-cysteinyl-[protein] + A + AMP + diphosphate + H(+). Catalyzes the 2-thiolation of uridine at the wobble position (U34) of tRNA, leading to the formation of s(2)U34. This chain is tRNA-specific 2-thiouridylase MnmA, found in Xylella fastidiosa (strain M12).